Here is a 1381-residue protein sequence, read N- to C-terminus: Regulator of G-protein signaling 12 (1381 aa).

Residues serine 21–threonine 98 form the PDZ domain. 2 positions are modified to phosphoserine: serine 171 and serine 194. A Glycyl lysine isopeptide (Lys-Gly) (interchain with G-Cter in SUMO2) cross-link involves residue lysine 195. The 168-residue stretch at serine 223–arginine 390 folds into the PID domain. Disordered stretches follow at residues alanine 409 to phenylalanine 428, leucine 442 to glycine 528, and arginine 620 to threonine 644. Over residues histidine 412 to phenylalanine 428 the composition is skewed to polar residues. Residues arginine 524 and arginine 633 each carry the omega-N-methylarginine modification. Residues serine 661 and serine 671 each carry the phosphoserine modification. The RGS domain maps to serine 715–valine 832. Residues proline 842–glycine 942 form a disordered region. The segment covering serine 849–lysine 869 has biased composition (low complexity). 2 positions are modified to phosphoserine: serine 850 and serine 879. The span at aspartate 914–proline 923 shows a compositional bias: basic and acidic residues. Position 943 is a phosphoserine (serine 943). RBD domains lie at lysine 962–arginine 1032 and leucine 1034–arginine 1104. Residues glutamate 1102–lysine 1117 are compositionally biased toward basic and acidic residues. The disordered stretch occupies residues glutamate 1102 to glutamate 1169. Residues lysine 1122 to arginine 1132 show a composition bias toward polar residues. Over residues isoleucine 1151–glutamate 1169 the composition is skewed to basic and acidic residues. Residues alanine 1187–leucine 1209 enclose the GoLoco domain. Disordered stretches follow at residues serine 1227–threonine 1318 and leucine 1347–phenylalanine 1381. Residues serine 1261 to proline 1280 are compositionally biased toward low complexity. Residues leucine 1361 to phenylalanine 1381 are compositionally biased toward pro residues.

Interacts with GNAI1, GNAI2 and GNAI3; the interactions are GDP-dependent. In terms of tissue distribution, expressed in brain.

The protein resides in the nucleus. Its subcellular location is the cytoplasm. It is found in the cell projection. The protein localises to the dendrite. It localises to the synapse. Functionally, regulates G protein-coupled receptor signaling cascades. Inhibits signal transduction by increasing the GTPase activity of G protein alpha subunits, thereby driving them into their inactive GDP-bound form. This chain is Regulator of G-protein signaling 12 (Rgs12), found in Mus musculus (Mouse).